A 248-amino-acid chain; its full sequence is Murein peptide amidase A (248 aa).

A Peptidase M14 domain is found at 3–245 (RYYSNNQEIT…DAFIALLQHD (243 aa)). Positions 60, 63, and 168 each coordinate Zn(2+). Glu-221 functions as the Proton donor/acceptor in the catalytic mechanism.

This sequence belongs to the peptidase M14 family. Homodimer. It depends on Zn(2+) as a cofactor.

The protein localises to the cytoplasm. The catalysed reaction is L-alanyl-gamma-D-glutamyl-meso-2,6-diaminopimelate + H2O = L-alanyl-D-glutamate + meso-2,6-diaminopimelate. The protein operates within cell wall degradation; peptidoglycan degradation. Functionally, involved in muropeptide degradation. Catalyzes the hydrolysis of the gamma-D-glutamyl-diaminopimelic acid (gamma-D-Glu-Dap) amide bond in the murein tripeptide L-alanyl-gamma-D-glutamyl-meso-diaminopimelic acid, leading to the formation of L-Ala-gamma-D-Glu and Dap. Has weak activity with L-Ala-gamma-D-Glu-L-Lys, MurNAc-tripeptide and gamma-D-Glu-meso-Dap. Cannot hydrolyze murein tetrapeptide. The protein is Murein peptide amidase A of Vibrio campbellii (strain ATCC BAA-1116).